Here is a 133-residue protein sequence, read N- to C-terminus: uncharacterized protein (133 aa).

This is an uncharacterized protein from Homo sapiens (Human).